Here is a 288-residue protein sequence, read N- to C-terminus: MILLALPNKGRISKPVNEILEKAGLKISVHGRSLFAQTVDPEIKVMFARAKDIPEFVRDGVADVGVTGYDLMLERDTEEELEMLLDFKFGNARLVIAAPENSTVNSIKDVKDGMKIATEFPGLTKRYLEKKGLNLEIIELSGATEIAPFIGVSDLICDLTSTGTTLQLNRLKEVENVVSSTTRLVANKKSMEDPEKCAKINQVLSGIKSVLYAQSKRLIMMNAPKDKVSEITSIIPGMGGPTVSEILSNDKMLAINAVIDENKVFETVTNLEMLGARDILVVPIERIL.

It belongs to the ATP phosphoribosyltransferase family. Long subfamily. The cofactor is Mg(2+).

It is found in the cytoplasm. It catalyses the reaction 1-(5-phospho-beta-D-ribosyl)-ATP + diphosphate = 5-phospho-alpha-D-ribose 1-diphosphate + ATP. The protein operates within amino-acid biosynthesis; L-histidine biosynthesis; L-histidine from 5-phospho-alpha-D-ribose 1-diphosphate: step 1/9. Feedback inhibited by histidine. Functionally, catalyzes the condensation of ATP and 5-phosphoribose 1-diphosphate to form N'-(5'-phosphoribosyl)-ATP (PR-ATP). Has a crucial role in the pathway because the rate of histidine biosynthesis seems to be controlled primarily by regulation of HisG enzymatic activity. This Methanococcus maripaludis (strain C7 / ATCC BAA-1331) protein is ATP phosphoribosyltransferase.